The sequence spans 311 residues: Ribosomal RNA small subunit methyltransferase H (311 aa).

S-adenosyl-L-methionine is bound by residues 39 to 41, D59, F81, D102, and H109; that span reads GGH.

This sequence belongs to the methyltransferase superfamily. RsmH family.

It localises to the cytoplasm. It catalyses the reaction cytidine(1402) in 16S rRNA + S-adenosyl-L-methionine = N(4)-methylcytidine(1402) in 16S rRNA + S-adenosyl-L-homocysteine + H(+). Specifically methylates the N4 position of cytidine in position 1402 (C1402) of 16S rRNA. This chain is Ribosomal RNA small subunit methyltransferase H, found in Porphyromonas gingivalis (strain ATCC BAA-308 / W83).